Here is a 579-residue protein sequence, read N- to C-terminus: DELLA protein RGA2 (579 aa).

The interval 1-31 (MKRDLHQFQGPPDTRFPNHGTANTGSSSKDK) is disordered. A DELLA motif motif is present at residues 45–49 (DELLA). 2 stretches are compositionally biased toward low complexity: residues 149–162 (SSSS…NSQS) and 174–183 (SLVTGTTVTT). Positions 149–183 (SSSSSNQAGDNSQSTKRLKSCSSPDSLVTGTTVTT) are disordered. Positions 205 to 574 (VDSQENGVRL…RPLITTSAWK (370 aa)) constitute a GRAS domain. Residues 212 to 266 (VRLVHALMACAEAIQNNDLSIAEALVKQIGFLAVSQAGAMRKVATYFAEALARRI) are leucine repeat I (LRI). The tract at residues 285–350 (QMHFYETCPY…GGPPVFRLTG (66 aa)) is VHIID. The VHIID signature appears at 316-320 (VHVID). The interval 364–396 (EVGCKLAQLAEAIHVEFEYRGFVANSLADLDAS) is leucine repeat II (LRII). The segment at 408–495 (VAVNSVFELH…EVYLGKQICN (88 aa)) is PFYRE. The short motif at 416-420 (LHKLL) is the LXXLL motif element. An SAW region spans residues 498–574 (ACEGPDRVER…RPLITTSAWK (77 aa)).

This sequence belongs to the GRAS family. DELLA subfamily. Post-translationally, phosphorylated. Ubiquitinated. Upon GA application it is ubiquitinated, leading to its subsequent degradation.

The protein localises to the nucleus. In terms of biological role, probable transcriptional regulator that acts as a repressor of the gibberellin (GA) signaling pathway. Probably acts by participating in large multiprotein complexes that represses transcription of GA-inducible genes. Upon GA application, it is degraded by the proteasome, allowing the GA signaling pathway. In Brassica campestris (Field mustard), this protein is DELLA protein RGA2 (RGA2).